The sequence spans 606 residues: MNLFTPLMLTAMFILLLPIIMSNTQLYKNSLYPHYVKTTISYAFIISMIPTMMFISSGQEAIISNWHWLSIQTLKLSLSFKMDYFSTIFIPVALFVTWSIMEFSMWYMHSDPYINRFFKYLLMFLITMMILVTANNLFQLFIGWEGVGIMSFLLIGWWYGRADANTAALQAILYNRIGDVGFIMAMAWFLTNSNAWDFQQIFITQHENLNIPLLGLLLAATGKSAQFGLHPWLPSAMEGPTPVSALLHSSTMVVAGVFLLIRFYPLMEQNKTMQTLTLCLGAITTLFTAICALTQNDIKKVVAFSTSSQLGLMIVTIGINQPYLAFLHICTHAFFKAMLFMCSGSIIHSLNDEQDIRKMGGLYKPMPFTTTSLIIGSLALTGMPFLTGFYSKDLIIETANTSYTNAWALLITLIATSLTAAYSTRIMFFVLLGQPRFNTLNLINENNTHLINSIKRLLIGSIFAGYLISYNIPPTTIPQMTMPYYLKLTALAVTIAGFILALELNLAAKNLKFMYPSNLFKFSNLLGYFPIVMHRLPSKMSLTMSQKSASMLLDMIWLENVLPKSISLFQMKMSTTVSNQKGLVKLYFLSFMITLALSLILLNSHE.

Transmembrane regions (helical) follow at residues 1-21 (MNLFTPLMLTAMFILLLPIIM), 43-63 (AFIISMIPTMMFISSGQEAII), 88-108 (IFIPVALFVTWSIMEFSMWYM), 117-137 (FFKYLLMFLITMMILVTANNL), 140-160 (LFIGWEGVGIMSFLLIGWWYG), 171-191 (AILYNRIGDVGFIMAMAWFLT), 209-229 (LNIPLLGLLLAATGKSAQFGL), 241-261 (TPVSALLHSSTMVVAGVFLLI), 273-293 (MQTLTLCLGAITTLFTAICAL), 310-330 (LGLMIVTIGINQPYLAFLHIC), 366-386 (MPFTTTSLIIGSLALTGMPFL), 413-433 (LIATSLTAAYSTRIMFFVLLG), 457-477 (LLIGSIFAGYLISYNIPPTTI), 488-508 (LTALAVTIAGFILALELNLAA), 513-533 (FMYPSNLFKFSNLLGYFPIVM), and 582-602 (GLVKLYFLSFMITLALSLILL).

Belongs to the complex I subunit 5 family. In terms of assembly, core subunit of respiratory chain NADH dehydrogenase (Complex I) which is composed of 45 different subunits.

It is found in the mitochondrion inner membrane. The catalysed reaction is a ubiquinone + NADH + 5 H(+)(in) = a ubiquinol + NAD(+) + 4 H(+)(out). Functionally, core subunit of the mitochondrial membrane respiratory chain NADH dehydrogenase (Complex I) which catalyzes electron transfer from NADH through the respiratory chain, using ubiquinone as an electron acceptor. Essential for the catalytic activity and assembly of complex I. This chain is NADH-ubiquinone oxidoreductase chain 5 (MT-ND5), found in Felis catus (Cat).